The primary structure comprises 639 residues: Zinc finger protein ZIC 5 (639 aa).

Disordered regions lie at residues 113-171 (PCGG…GHSR), 189-251 (HGAP…GHPH), 323-355 (PGPH…HLPG), and 379-409 (PDEL…PCSK). Residues 124 to 150 (SAPPPPAPPLPPTPSPPPPPPPPPPPA) are compositionally biased toward pro residues. Pro residues-rich tracts occupy residues 331-343 (APPP…PAPA) and 385-401 (LPPP…PPPA). The C2H2-type 1; atypical zinc-finger motif lies at 434 to 461 (HVCFWEDCPREGKPFKAKYKLINHIRVH). 3 C2H2-type zinc fingers span residues 467-491 (FPCP…KRTH), 497-521 (FKCE…SHVH), and 527-551 (YYCK…MKIH). The disordered stretch occupies residues 548-568 (MKIHCKSPPPSPGPLGYSSVG). Residues S554, S558, and S576 each carry the phosphoserine modification. The disordered stretch occupies residues 607-639 (APSHLHTPSSNGTTSETEDEEIYGNPEVVRTIH). Residues 612–621 (HTPSSNGTTS) are compositionally biased toward polar residues.

It belongs to the GLI C2H2-type zinc-finger protein family.

The protein localises to the nucleus. Essential for neural crest development, converting cells from an epidermal fate to a neural crest cell fate. Binds to DNA. The polypeptide is Zinc finger protein ZIC 5 (ZIC5) (Homo sapiens (Human)).